We begin with the raw amino-acid sequence, 117 residues long: Ig heavy chain V region 1-72 (117 aa).

A signal peptide spans Met-1–Ser-19. Residues Gln-20–Thr-49 form a framework-1 region. A disulfide bond links Cys-41 and Cys-115. Positions Ser-50–His-54 are complementarity-determining-1. Positions Trp-55–Gly-68 are framework-2. Residues Arg-69–Ser-85 form a complementarity-determining-2 region. The tract at residues Lys-86–Arg-117 is framework-3.

This Mus musculus (Mouse) protein is Ig heavy chain V region 1-72.